We begin with the raw amino-acid sequence, 156 residues long: MSQKDPYKTYRLVSDPFYESPLVTLLIMHVLRNGKKSISQRIVYSAIENIAMKVKEDPLEIIERAIKNVIPAVEIRSRRIGGSTYQVPTEVRVHRGISLSIRWVIKFAKIRPGKSMSLKLANELLDASKNLGNSIRKKEDTHKMAEANRAFAHYRY.

It belongs to the universal ribosomal protein uS7 family. Part of the 30S ribosomal subunit.

The protein resides in the plastid. It is found in the chloroplast. Its function is as follows. One of the primary rRNA binding proteins, it binds directly to 16S rRNA where it nucleates assembly of the head domain of the 30S subunit. This chain is Small ribosomal subunit protein uS7c (rps7), found in Cyanidium caldarium (Red alga).